Here is a 340-residue protein sequence, read N- to C-terminus: DNA polymerase III subunit delta' (340 aa).

The DNA polymerase holoenzyme is a complex that contains 10 different types of subunits. These subunits are organized into 3 functionally essential subassemblies: the pol III core, the beta sliding clamp processivity factor and the clamp-loading complex. The pol III core (subunits alpha,epsilon and theta) contains the polymerase and the 3'-5' exonuclease proofreading activities. The polymerase is tethered to the template via the sliding clamp processivity factor. The clamp-loading complex assembles the beta processivity factor onto the primer template and plays a central role in the organization and communication at the replication fork. This complex contains delta, delta', psi and chi, and copies of either or both of two different DnaX proteins, gamma and tau. The composition of the holoenzyme is, therefore: (alpha,epsilon,theta)[2]-(gamma/tau)[3]-delta,delta', psi,chi-beta[4].

It catalyses the reaction DNA(n) + a 2'-deoxyribonucleoside 5'-triphosphate = DNA(n+1) + diphosphate. Its function is as follows. DNA polymerase III is a complex, multichain enzyme responsible for most of the replicative synthesis in bacteria. This DNA polymerase also exhibits 3' to 5' exonuclease activity. In Yersinia pestis, this protein is DNA polymerase III subunit delta' (holB).